The primary structure comprises 118 residues: Large ribosomal subunit protein bL20 (118 aa).

This sequence belongs to the bacterial ribosomal protein bL20 family.

Functionally, binds directly to 23S ribosomal RNA and is necessary for the in vitro assembly process of the 50S ribosomal subunit. It is not involved in the protein synthesizing functions of that subunit. This chain is Large ribosomal subunit protein bL20, found in Salmonella arizonae (strain ATCC BAA-731 / CDC346-86 / RSK2980).